Here is a 131-residue protein sequence, read N- to C-terminus: MTDPIADYLTRLRNAIKAKHRVVEVPASNLKKEITKILFDKGYILNFKFVEDGPQGTIKIALKYDLVNKVNAIKKLERVSTPGLRKYTGYKEMPRVLNGLGIAVLSTSKGVMTDKEARDLKIGGEVLCYVY.

The protein belongs to the universal ribosomal protein uS8 family. As to quaternary structure, part of the 30S ribosomal subunit. Contacts proteins S5 and S12.

Functionally, one of the primary rRNA binding proteins, it binds directly to 16S rRNA central domain where it helps coordinate assembly of the platform of the 30S subunit. The protein is Small ribosomal subunit protein uS8 of Parabacteroides distasonis (strain ATCC 8503 / DSM 20701 / CIP 104284 / JCM 5825 / NCTC 11152).